Consider the following 260-residue polypeptide: Diphthine synthase (260 aa).

Residues Leu9, Asp85, Ile88, 113–114, Leu168, Ala208, and His233 contribute to the S-adenosyl-L-methionine site; that span reads TA.

This sequence belongs to the diphthine synthase family. Homodimer.

The catalysed reaction is 2-[(3S)-amino-3-carboxypropyl]-L-histidyl-[translation elongation factor 2] + 3 S-adenosyl-L-methionine = diphthine-[translation elongation factor 2] + 3 S-adenosyl-L-homocysteine + 3 H(+). The protein operates within protein modification; peptidyl-diphthamide biosynthesis. S-adenosyl-L-methionine-dependent methyltransferase that catalyzes the trimethylation of the amino group of the modified target histidine residue in translation elongation factor 2 (EF-2), to form an intermediate called diphthine. The three successive methylation reactions represent the second step of diphthamide biosynthesis. The sequence is that of Diphthine synthase from Halobacterium salinarum (strain ATCC 29341 / DSM 671 / R1).